The primary structure comprises 466 residues: Asparagine--tRNA ligase (466 aa).

The protein belongs to the class-II aminoacyl-tRNA synthetase family. As to quaternary structure, homodimer.

It is found in the cytoplasm. The catalysed reaction is tRNA(Asn) + L-asparagine + ATP = L-asparaginyl-tRNA(Asn) + AMP + diphosphate + H(+). This chain is Asparagine--tRNA ligase, found in Enterobacter sp. (strain 638).